We begin with the raw amino-acid sequence, 158 residues long: 6,7-dimethyl-8-ribityllumazine synthase (158 aa).

Residues F23, 61–63 (SME), and 85–87 (AVI) each bind 5-amino-6-(D-ribitylamino)uracil. Residue 90 to 91 (DT) coordinates (2S)-2-hydroxy-3-oxobutyl phosphate. H93 serves as the catalytic Proton donor. Y118 contributes to the 5-amino-6-(D-ribitylamino)uracil binding site. Residue R132 participates in (2S)-2-hydroxy-3-oxobutyl phosphate binding.

The protein belongs to the DMRL synthase family.

It carries out the reaction (2S)-2-hydroxy-3-oxobutyl phosphate + 5-amino-6-(D-ribitylamino)uracil = 6,7-dimethyl-8-(1-D-ribityl)lumazine + phosphate + 2 H2O + H(+). The protein operates within cofactor biosynthesis; riboflavin biosynthesis; riboflavin from 2-hydroxy-3-oxobutyl phosphate and 5-amino-6-(D-ribitylamino)uracil: step 1/2. In terms of biological role, catalyzes the formation of 6,7-dimethyl-8-ribityllumazine by condensation of 5-amino-6-(D-ribitylamino)uracil with 3,4-dihydroxy-2-butanone 4-phosphate. This is the penultimate step in the biosynthesis of riboflavin. The chain is 6,7-dimethyl-8-ribityllumazine synthase from Prochlorococcus marinus (strain MIT 9211).